The sequence spans 380 residues: Ribosomal RNA large subunit methyltransferase G (380 aa).

It belongs to the methyltransferase superfamily. RlmG family.

Its subcellular location is the cytoplasm. It catalyses the reaction guanosine(1835) in 23S rRNA + S-adenosyl-L-methionine = N(2)-methylguanosine(1835) in 23S rRNA + S-adenosyl-L-homocysteine + H(+). In terms of biological role, specifically methylates the guanine in position 1835 (m2G1835) of 23S rRNA. The polypeptide is Ribosomal RNA large subunit methyltransferase G (Streptomyces avermitilis (strain ATCC 31267 / DSM 46492 / JCM 5070 / NBRC 14893 / NCIMB 12804 / NRRL 8165 / MA-4680)).